A 246-amino-acid chain; its full sequence is Short chain dehydrogenase/reductase dmxR12 (246 aa).

Positions 15, 34, 125, and 164 each coordinate NADP(+). Lys-164 serves as the catalytic Lowers pKa of active site Tyr.

This sequence belongs to the short-chain dehydrogenases/reductases (SDR) family.

It participates in secondary metabolite biosynthesis. In terms of biological role, short chain dehydrogenase/reductase; part of the gene cluster that mediates the biosynthesis of the dimeric xanthones cryptosporioptides. The pathway begins with the synthesis of atrochrysone thioester by the polyketide synthase dmx-nrPKS. The atrochrysone carboxyl ACP thioesterase dmxR1 then breaks the thioester bond and releases the atrochrysone carboxylic acid from dmx-nrPKS. Atrochrysone carboxylic acid is decarboxylated by the decarboxylase dmxR15, and oxidized by the anthrone oxygenase dmxR16 to yield emodin. Emodin is then reduced to emodin hydroquinone by the oxidoreductase dmxR7. A-ring reduction by the short chain dehydrogenase dmxR18, dehydration by the scytalone dehydratase-like protein dmxR17 and probable spontaneous re-oxidation, results in overall deoxygenation to chrysophanol. Baeyer-Villiger oxidation by the Baeyer-Villiger monooxygenase (BVMO) dmxR6 then yields monodictylactone in equilibrium with monodictyphenone. In the case of the cryptosporioptides biosynthesis, monodictylactone is reduced at C-12 to an alcohol (by the short chain dehydrogenases dmxR12 or dmxR8) and hydroxylated at C-5 by dmxR9, yielding the electron-rich aromatic which could eliminate H(2)O to form the ortho-quinonemethide, followed by tautomerisation to paraquinone and complete the formal reduction to produce the 10-methylgroup. Conjugate addition of C-4a-OH to the resulting paraquinone by the monooxygenase dmxR10 then gives cyclohexadienone, which is then reduced at C-5 by the short chain dehydrogenase dmxR3 to give the dihydroxanthone. The 6,7-epoxide in the cryptosporioptides could be introduced by the cytochrome P450 monooxygenase dmxL3. The highly reducing PKS dmxL2 manufactures butyrate, which is further carboxylated by dmxL1 to form ethylmalonate. It is not yet clear whether the carboxylation occurs while the butyrate is attached to the ACP of dmxL2, but this unusual fungal metabolite could then be esterified to O-5 by the O-acetyltransferase dmxR13. Finally, dimerization performed by dmxR5 gives the observed dimers cryptosporioptides A, B and C as the final products of the pathway. The protein is Short chain dehydrogenase/reductase dmxR12 of Cryptosporiopsis sp. (strain 8999).